The following is a 261-amino-acid chain: MRFLILFLALSLGGIDAAPPLQSRVVGGFNCEKNSQPWQVAVYDNKEHICGGVLLERNWVLTAAHCYVDQYEVWLGKNKLFQEEPSAQHRLVSKSFPHPGFNMSLLTLKEIPPGADFSNDLMLLRLSKPADITDAVKPITLPTKESKLGSTCLASGWGSITPTKWQKPDDLQCVFLKLLPIKNCIENHNVKVTDVMLCAGEMSGGKNICKGDSGGPLICDSVLQGITSTGPIPCGKPGVPAMYTNLIKFNSWIKDTMTKNS.

The N-terminal stretch at 1 to 18 (MRFLILFLALSLGGIDAA) is a signal peptide. The propeptide at 19 to 24 (PPLQSR) is activation peptide. In terms of domain architecture, Peptidase S1 spans 25-258 (VVGGFNCEKN…FNSWIKDTMT (234 aa)). Intrachain disulfides connect Cys31–Cys173, Cys50–Cys66, Cys152–Cys219, Cys184–Cys198, and Cys209–Cys234. His65 acts as the Charge relay system in catalysis. N-linked (GlcNAc...) asparagine glycosylation is present at Asn102. Residue Asp120 is the Charge relay system of the active site. The active-site Charge relay system is Ser213.

The protein belongs to the peptidase S1 family. Kallikrein subfamily.

The enzyme catalyses Preferential cleavage of Arg-|-Xaa bonds in small molecule substrates. Highly selective action to release kallidin (lysyl-bradykinin) from kininogen involves hydrolysis of Met-|-Xaa or Leu-|-Xaa.. Its function is as follows. Glandular kallikreins cleave Met-Lys and Arg-Ser bonds in kininogen to release Lys-bradykinin. This is Kallikrein 1-related peptidase b8 (Klk1b8) from Mus musculus (Mouse).